Consider the following 130-residue polypeptide: Small ribosomal subunit protein uS9 (130 aa).

This sequence belongs to the universal ribosomal protein uS9 family.

The polypeptide is Small ribosomal subunit protein uS9 (Salmonella paratyphi C (strain RKS4594)).